The primary structure comprises 88 residues: U-scoloptoxin(XY)-Er1b (88 aa).

A signal peptide spans 1–24 (MASQVVLSFALVVVLAVFVGQVDS). The segment at 66–88 (RPELSPGALDDSSEEKDNEASLA) is disordered. A propeptide spanning residues 79–88 (EEKDNEASLA) is cleaved from the precursor.

Belongs to the scoloptoxin-XY family. Post-translationally, contains 3 disulfide bonds. Expressed by the venom gland.

Its subcellular location is the secreted. The chain is U-scoloptoxin(XY)-Er1b from Ethmostigmus rubripes (Giant centipede).